The primary structure comprises 519 residues: LysM domain-containing protein ARB_03442 (519 aa).

Positions 1–19 (MGQLKQLAGILALASPAIA) are cleaved as a signal peptide. N47 is a glycosylation site (N-linked (GlcNAc...) asparagine). Residues 312 to 358 (KYYNVVAGDTCASISSEFEVTMDELLTYNPELHPNCENLWANFAICV) form the LysM domain. The tract at residues 314–358 (YNVVAGDTCASISSEFEVTMDELLTYNPELHPNCENLWANFAICV) is lysM domain. Low complexity predominate over residues 407–416 (PDAPDAQGQT). The interval 407–458 (PDAPDAQGQTVHDDEPPEEPHIEEPPKDIPAGDDDDRKKAKLPLPSGKYPLP) is disordered. Residues 417–433 (VHDDEPPEEPHIEEPPK) show a composition bias toward basic and acidic residues. A glycan (N-linked (GlcNAc...) asparagine) is linked at N460. The 44-residue stretch at 467–510 (DGSCNEYISCVGSPFGVCCSTSGWCGYGKPWCGVGNCVSGYCDT) folds into the Chitin-binding type-1 domain. Intrachain disulfides connect C470/C485, C476/C491, C484/C498, and C503/C508.

The protein localises to the secreted. In terms of biological role, might have a role in sequestration of chitin oligosaccharides (breakdown products of fungal cell walls that are released during invasion and act as triggers of host immunity) to dampen host defense. The chain is LysM domain-containing protein ARB_03442 from Arthroderma benhamiae (strain ATCC MYA-4681 / CBS 112371) (Trichophyton mentagrophytes).